Consider the following 326-residue polypeptide: Aspartate carbamoyltransferase catalytic subunit (326 aa).

2 residues coordinate carbamoyl phosphate: R76 and T77. Residue K104 coordinates L-aspartate. Carbamoyl phosphate-binding residues include R126, H156, and Q159. L-aspartate is bound by residues R189 and R244. Positions 285 and 286 each coordinate carbamoyl phosphate.

This sequence belongs to the aspartate/ornithine carbamoyltransferase superfamily. ATCase family. As to quaternary structure, heterododecamer (2C3:3R2) of six catalytic PyrB chains organized as two trimers (C3), and six regulatory PyrI chains organized as three dimers (R2).

It catalyses the reaction carbamoyl phosphate + L-aspartate = N-carbamoyl-L-aspartate + phosphate + H(+). It participates in pyrimidine metabolism; UMP biosynthesis via de novo pathway; (S)-dihydroorotate from bicarbonate: step 2/3. In terms of biological role, catalyzes the condensation of carbamoyl phosphate and aspartate to form carbamoyl aspartate and inorganic phosphate, the committed step in the de novo pyrimidine nucleotide biosynthesis pathway. This chain is Aspartate carbamoyltransferase catalytic subunit, found in Polynucleobacter asymbioticus (strain DSM 18221 / CIP 109841 / QLW-P1DMWA-1) (Polynucleobacter necessarius subsp. asymbioticus).